The following is a 291-amino-acid chain: 4-diphosphocytidyl-2-C-methyl-D-erythritol kinase (291 aa).

Lysine 11 is an active-site residue. 95-105 contributes to the ATP binding site; it reads PVAAGLAGGSS. The active site involves aspartate 137.

It belongs to the GHMP kinase family. IspE subfamily.

The catalysed reaction is 4-CDP-2-C-methyl-D-erythritol + ATP = 4-CDP-2-C-methyl-D-erythritol 2-phosphate + ADP + H(+). It participates in isoprenoid biosynthesis; isopentenyl diphosphate biosynthesis via DXP pathway; isopentenyl diphosphate from 1-deoxy-D-xylulose 5-phosphate: step 3/6. Functionally, catalyzes the phosphorylation of the position 2 hydroxy group of 4-diphosphocytidyl-2C-methyl-D-erythritol. The chain is 4-diphosphocytidyl-2-C-methyl-D-erythritol kinase from Alkaliphilus metalliredigens (strain QYMF).